The primary structure comprises 145 residues: Cuticle protein 65 (145 aa).

7 repeat units span residues 27–30, 33–37, 39–42, 86–89, 92–95, 98–101, and 123–126.

Its function is as follows. Component of the cuticle of migratory locust which contains more than 100 different structural proteins. The protein is Cuticle protein 65 of Locusta migratoria (Migratory locust).